A 94-amino-acid chain; its full sequence is C-C motif chemokine 17 (94 aa).

Residues 1 to 23 (MAPLKMLALVILLLGASLQHIHA) form the signal peptide. Cystine bridges form between Cys-33/Cys-57 and Cys-34/Cys-73.

It belongs to the intercrine beta (chemokine CC) family.

It is found in the secreted. Functionally, chemokine, which displays chemotactic activity for T lymphocytes, preferentially Th2 cells, but not monocytes or granulocytes. Therefore plays an important role in a wide range of inflammatory and immunological processes. Acts by binding to CCR4 at T-cell surface. Mediates GM-CSF/CSF2-driven pain and inflammation. In the brain, required to maintain the typical, highly branched morphology of hippocampal microglia under homeostatic conditions. May be important for the appropriate adaptation of microglial morphology and synaptic plasticity to acute lipopolysaccharide (LPS)-induced neuroinflammation. Plays a role in wound healing, mainly by inducing fibroblast migration into the wound. This Macaca mulatta (Rhesus macaque) protein is C-C motif chemokine 17 (CCL17).